The primary structure comprises 401 residues: Calcium-responsive transcription coactivator (401 aa).

The N-terminal auto-inhibitory domain; necessary for interaction with SMARCA4/BRG1 stretch occupies residues 1-148; that stretch reads MSVAFASARP…TLPTTSMSMS (148 aa). An SH2-binding motif is present at residues 50-53; the sequence is YQQI. 2 disordered regions span residues 72-171 and 214-401; these read QSLL…VPMQ and TRAR…NYQQ. Residues 85–106 show a composition bias toward low complexity; sequence LGPGALSQSGSSQGLHPQGSLS. The span at 128-137 shows a compositional bias: polar residues; that stretch reads NHVSMQQTAQ. The span at 138–149 shows a compositional bias: low complexity; sequence STLPTTSMSMSG. The tract at residues 149-237 is methionine-rich intra-molecular domain; it reads GSGHGTGPGY…GGSMMGQRPM (89 aa). The tract at residues 251-322 is MFD domain; it reads YLGQEEYYSE…SQYSQQQAGY (72 aa). 2 stretches are compositionally biased toward polar residues: residues 260–276 and 285–294; these read EQYS…SQQY and AYQQSSYTEQ. Basic and acidic residues predominate over residues 295 to 304; the sequence is SYDRSFEDPT. Residues 310-374 show a composition bias toward low complexity; that stretch reads GGNSQYSQQQ…QGQGQQYGSY (65 aa). Positions 339-401 are necessary for nuclear localization; the sequence is NQQSYPGQQQ…EQGQYGNYQQ (63 aa). An SH2-binding motif is present at residues 358-361; the sequence is SQYS. The segment covering 375–387 has biased composition (polar residues); it reads RTSQTGPSAQQQR. The SH3-binding motif lies at 376 to 384; it reads TSQTGPSAQ. Residues 389 to 401 are compositionally biased toward low complexity; sequence YGYEQGQYGNYQQ. The interval 392-401 is necessary for interaction with CREBBP and for the recruitment of CREBBP to the nuclear bodies; that stretch reads EQGQYGNYQQ. The SH2-binding motif lies at 396 to 399; that stretch reads YGNY.

It belongs to the SS18 family. As to quaternary structure, homodimer. Dimerization may be necessary for its function in neuronal dendritic development. Interacts (via C-terminus) with CREBBP (via N-terminus), EP300 and SMARCA4/BRG1. Interacts with the nBAF complex. Association with CREBBP facilitates transcription while the association with SMARCA4/BRG1 suppresses CREST-mediated transcription in resting neurons. Brain (at protein level). Also found in the heart, liver, kidney and testis.

It localises to the nucleus. It is found in the chromosome. The protein resides in the centromere. The protein localises to the kinetochore. In terms of biological role, transcriptional activator which is required for calcium-dependent dendritic growth and branching in cortical neurons. Recruits CREB-binding protein (CREBBP) to nuclear bodies. Component of the CREST-BRG1 complex, a multiprotein complex that regulates promoter activation by orchestrating a calcium-dependent release of a repressor complex and a recruitment of an activator complex. In resting neurons, transcription of the c-FOS promoter is inhibited by BRG1-dependent recruitment of a phospho-RB1-HDAC1 repressor complex. Upon calcium influx, RB1 is dephosphorylated by calcineurin, which leads to release of the repressor complex. At the same time, there is increased recruitment of CREBBP to the promoter by a CREST-dependent mechanism, which leads to transcriptional activation. The CREST-BRG1 complex also binds to the NR2B promoter, and activity-dependent induction of NR2B expression involves a release of HDAC1 and recruitment of CREBBP. In Rattus norvegicus (Rat), this protein is Calcium-responsive transcription coactivator (Ss18l1).